The primary structure comprises 334 residues: Phosphate acyltransferase (334 aa).

It belongs to the PlsX family. In terms of assembly, homodimer. Probably interacts with PlsY.

The protein resides in the cytoplasm. It catalyses the reaction a fatty acyl-[ACP] + phosphate = an acyl phosphate + holo-[ACP]. It participates in lipid metabolism; phospholipid metabolism. In terms of biological role, catalyzes the reversible formation of acyl-phosphate (acyl-PO(4)) from acyl-[acyl-carrier-protein] (acyl-ACP). This enzyme utilizes acyl-ACP as fatty acyl donor, but not acyl-CoA. The sequence is that of Phosphate acyltransferase from Fervidobacterium nodosum (strain ATCC 35602 / DSM 5306 / Rt17-B1).